Here is a 520-residue protein sequence, read N- to C-terminus: Cytochrome b5 reductase 4 (520 aa).

N-acetylmethionine is present on Met-1. Over residues 1 to 16 (MLNVPSQSFPGPSSQQ) the composition is skewed to low complexity. Positions 1-27 (MLNVPSQSFPGPSSQQRVASGGRSKVP) are disordered. Residues 54–130 (LIEVTEEELK…LKECLVGRMA (77 aa)) enclose the Cytochrome b5 heme-binding domain. His-89 and His-112 together coordinate heme. The CS domain maps to 164 to 255 (PSSPSYDWFQ…KENTSWKCLG (92 aa)). One can recognise an FAD-binding FR-type domain in the interval 272–384 (LFYRKCQLVS…SNPEGNFIIS (113 aa)). Residues 364 to 379 (DQLQ…NPEG) and 391 to 423 (DLFL…KVKL) each bind FAD.

This sequence belongs to the flavoprotein pyridine nucleotide cytochrome reductase family. FAD is required as a cofactor.

It is found in the endoplasmic reticulum. It catalyses the reaction 2 Fe(III)-[cytochrome b5] + NADH = 2 Fe(II)-[cytochrome b5] + NAD(+) + H(+). In terms of biological role, NADH-cytochrome b5 reductase involved in endoplasmic reticulum stress response pathway. Plays a critical role in protecting pancreatic beta-cells against oxidant stress, possibly by protecting the cell from excess buildup of reactive oxygen species (ROS). The chain is Cytochrome b5 reductase 4 (CYB5R4) from Bos taurus (Bovine).